The following is a 155-amino-acid chain: Ribosome maturation factor RimP (155 aa).

Belongs to the RimP family.

Its subcellular location is the cytoplasm. Functionally, required for maturation of 30S ribosomal subunits. This chain is Ribosome maturation factor RimP, found in Listeria innocua serovar 6a (strain ATCC BAA-680 / CLIP 11262).